The sequence spans 446 residues: Probable D-serine dehydratase (446 aa).

Lys-118 bears the N6-(pyridoxal phosphate)lysine mark.

This sequence belongs to the serine/threonine dehydratase family. DsdA subfamily. The cofactor is pyridoxal 5'-phosphate.

It catalyses the reaction D-serine = pyruvate + NH4(+). This Ectopseudomonas mendocina (strain ymp) (Pseudomonas mendocina) protein is Probable D-serine dehydratase.